Reading from the N-terminus, the 1768-residue chain is Callose synthase 11 (1768 aa).

Over 1 to 308 the chain is Cytoplasmic; it reads MRRQRPSVAT…WNVYRSFDRL (308 aa). Residues 309–329 traverse the membrane as a helical segment; that stretch reads WILLLLYLQAAIIVATSDVKF. At 330–335 the chain is on the extracellular side; the sequence is PWQDRD. The chain crosses the membrane as a helical span at residues 336-356; the sequence is VEVALLTVFISWAGLRLLQSV. The Cytoplasmic segment spans residues 357 to 370; sequence LDASTQYSLVSRET. A helical transmembrane segment spans residues 371 to 391; sequence YWLFIRLTLKFVVAVAWTVLF. Residues 392 to 421 lie on the Extracellular side of the membrane; sequence SVFYARIWSQKNKDGVWSRAANERVVTFLK. The chain crosses the membrane as a helical span at residues 422–442; the sequence is VVFVYVIPELLALVLFIVPCI. Topologically, residues 443 to 480 are cytoplasmic; sequence RNWVEELNLGVVYFLTWWFYSKTFVGRGMREGLVDNVK. Residues 481–501 form a helical membrane-spanning segment; that stretch reads YTLFWIIVLATKFIFSYFLQI. Topologically, residues 502 to 530 are extracellular; the sequence is RPLIAPTRALLNLKDATYNWHEFFGSTHR. The chain crosses the membrane as a helical span at residues 531–551; it reads IAVGMLWLPVILVYLMDLQIW. Residues 552-1341 are Cytoplasmic-facing; it reads YSIYSSLVGA…FFRMLSFFYT (790 aa). A helical transmembrane segment spans residues 1342 to 1362; it reads TVGYYFNTMLIVFTVYAFLWG. The Extracellular segment spans residues 1363–1386; that stretch reads RLYLALSGVEKIAKDRSSSNEALG. Residues 1387–1407 traverse the membrane as a helical segment; it reads AILNQQFIIQLGLFTALPMIL. Residues 1408 to 1413 lie on the Cytoplasmic side of the membrane; it reads ENSLER. Residues 1414-1434 form a helical membrane-spanning segment; sequence GFLPAVWDFITMQLQLASFFY. At 1435-1481 the chain is on the extracellular side; sequence TFSMGTRTHYFGRTILHGGAKYRATGRGFVVEHKKFAENYRLYARTH. Residues 1482 to 1502 traverse the membrane as a helical segment; that stretch reads FIKAIELAIILLVYAAYSPLA. Topologically, residues 1503–1508 are cytoplasmic; that stretch reads KSSFVY. A helical transmembrane segment spans residues 1509–1529; sequence ILMTISSWFLITSWIISPFLF. Residues 1530–1583 lie on the Extracellular side of the membrane; it reads NPSGFDWLKTVNDFDDFIAWLWSRGGLFTKADQSWFTWWNEEQEHLKTTGVWGK. A helical membrane pass occupies residues 1584 to 1604; it reads LLEIILDLRFFFFQYSIVYHL. Residues 1605-1612 lie on the Cytoplasmic side of the membrane; it reads RIAENRTS. The chain crosses the membrane as a helical span at residues 1613-1633; that stretch reads IGVYLISWGCIIGIVAIYITT. At 1634–1649 the chain is on the extracellular side; that stretch reads IYAQKRYSVKEHIKYR. A helical transmembrane segment spans residues 1650–1670; sequence FIQFLVILLTVLVVVMMLQFT. Over 1671–1673 the chain is Cytoplasmic; that stretch reads KLT. Residues 1674 to 1694 form a helical membrane-spanning segment; that stretch reads VVDLLISLLAFVPTGWGLISI. Topologically, residues 1695–1719 are extracellular; that stretch reads AQVLKPFLLSTVVWDTVISVARFYD. A helical membrane pass occupies residues 1720-1740; the sequence is LFFGLIVMAPVALLSWLPGFQ. Topologically, residues 1741-1768 are cytoplasmic; that stretch reads NMQTRILFNEAFSRGLQISIILAGKKST.

The protein belongs to the glycosyltransferase 48 family. As to expression, ubiquitous.

It localises to the cell membrane. It carries out the reaction [(1-&gt;3)-beta-D-glucosyl](n) + UDP-alpha-D-glucose = [(1-&gt;3)-beta-D-glucosyl](n+1) + UDP + H(+). Functionally, required the formation of the callose wall separating the tetraspores (interstitial wall), but not for the callose wall surrounding the pollen mother cells (peripheral wall). Functionally redudant to CALS12 (GSL5). During plant growth and development, callose is found as a transitory component of the cell plate in dividing cells, is a major component of pollen mother cell walls and pollen tubes, and is found as a structural component of plasmodesmatal canals. The sequence is that of Callose synthase 11 (CALS11) from Arabidopsis thaliana (Mouse-ear cress).